The chain runs to 35 residues: MAVYSYYPIDMVLLAHLIGIIYLIIILGTLVMLFS.

A helical membrane pass occupies residues 14 to 34; it reads LAHLIGIIYLIIILGTLVMLF.

It is found in the endoplasmic reticulum membrane. This is an uncharacterized protein from Saccharomyces cerevisiae (strain ATCC 204508 / S288c) (Baker's yeast).